The following is a 97-amino-acid chain: Putative regulatory protein Dole_1911 (97 aa).

This sequence belongs to the RemA family.

The polypeptide is Putative regulatory protein Dole_1911 (Desulfosudis oleivorans (strain DSM 6200 / JCM 39069 / Hxd3) (Desulfococcus oleovorans)).